Reading from the N-terminus, the 642-residue chain is MPVITLPDGSKREFANPVSTLDVAADIGPGLAKACIAGRVNGELKDACDIIDTDSELSIITAKDEEGVEILRHSCAHLLGHAFKQLWPEAKMAIGPVIDNGFYYDIDLDHKLTQEDIDALQKRMTQLAKTNYKVEKRVGSWQVARDTFEARGETYKMEVLDENISKDDQPALYHHEEYVDMCRGPHVPNMKFCQNFKLMSVAGAYWRGNSDNKMLQRVYGTAWADKKALKVHLNRLEEAAKRDHRKIGKQLDLYHMQEEAPGMVFWHNDGWSLFLELEKFIRQKLGQYTYQEVKGPLMMDRVLWERSGHWDKYADAMFTTNSENREYAIKPMNCPGHVQIFNQGLKSYRDLPLRMAEFGCCHRNEPSGSLHGLMRVRGFTQDDAHVFCTEDQVQQEVSACIKMVYDTYETFGFKDIVVKLSTRPEKRIGDDDMWDRSEEALKQALTANGIAYEILPGEGAFYGPKIEFTLHDCLDRAWQCGTVQLDYALPGRLGATYVAEDNSRQTPVMIHRAILGSLERFLGILIEEYAGKFPTWLAPMQVVVMNITDKQSDYVDEVVNIFKESGIRASKDLRNEKIGFKIREHTLRRVPYLLVVGDQEMDNKEVAVRTRDGVDLGKMRIEDFASKINEQISLRSLNLLED.

The TGS domain occupies 1-61 (MPVITLPDGS…DTDSELSIIT (61 aa)). The tract at residues 243–534 (DHRKIGKQLD…LIEEYAGKFP (292 aa)) is catalytic. Residues cysteine 334, histidine 385, and histidine 511 each contribute to the Zn(2+) site.

It belongs to the class-II aminoacyl-tRNA synthetase family. Homodimer. Zn(2+) serves as cofactor.

It localises to the cytoplasm. The enzyme catalyses tRNA(Thr) + L-threonine + ATP = L-threonyl-tRNA(Thr) + AMP + diphosphate + H(+). Its function is as follows. Catalyzes the attachment of threonine to tRNA(Thr) in a two-step reaction: L-threonine is first activated by ATP to form Thr-AMP and then transferred to the acceptor end of tRNA(Thr). Also edits incorrectly charged L-seryl-tRNA(Thr). This is Threonine--tRNA ligase from Shewanella sediminis (strain HAW-EB3).